The sequence spans 457 residues: Ribosome biogenesis protein YTM1 (457 aa).

The ubiquitin-like (UBL) domain stretch occupies residues 8–89 (VKVKFFTREK…ETTLTVEYTR (82 aa)). A sufficient for interaction with ERB1 and association with 66S pre-ribosomes region spans residues 99 to 457 (NFNNDDWVSA…INKGDNIFKN (359 aa)). WD repeat units follow at residues 101–140 (NNDD…EKQY), 142–180 (GHTG…GSVS), 203–241 (GHKA…MTAI), 282–322 (SHTG…CIDT), 324–363 (TTSY…SAKI), 370–410 (GHKN…PMYT), and 421–457 (GVND…IFKN). The tract at residues 172-191 (TKNDDGSVSNNTGDENDEEN) is disordered.

This sequence belongs to the WD repeat WDR12/YTM1 family. Component of the NOP7 complex, composed of ERB1, NOP7 and YTM1. The complex is held together by ERB1, which interacts with NOP7 via its N-terminal domain and with YTM1 via a high-affinity interaction between the seven-bladed beta-propeller domains of the 2 proteins. The NOP7 complex associates with the 66S pre-ribosome. Interacts (via UBL domain) with MDN1 (via VWFA/MIDAS domain).

The protein resides in the nucleus. It is found in the nucleolus. It localises to the nucleoplasm. In terms of biological role, component of the NOP7 complex, which is required for maturation of the 25S and 5.8S ribosomal RNAs and formation of the 60S ribosome. The chain is Ribosome biogenesis protein YTM1 from Candida glabrata (strain ATCC 2001 / BCRC 20586 / JCM 3761 / NBRC 0622 / NRRL Y-65 / CBS 138) (Yeast).